Consider the following 176-residue polypeptide: Isopentenyl-diphosphate Delta-isomerase (176 aa).

Residues His-23 and His-29 each coordinate Mn(2+). The Nudix hydrolase domain occupies 27-161; that stretch reads LRHLAISVFV…PERFTPWLKI (135 aa). Cys-63 is an active-site residue. Cys-63 contacts Mg(2+). Residue His-65 participates in Mn(2+) binding. Mg(2+) is bound at residue Glu-83. The Mn(2+) site is built by Glu-109 and Glu-111. Glu-111 is an active-site residue.

The protein belongs to the IPP isomerase type 1 family. The cofactor is Mg(2+). Mn(2+) is required as a cofactor.

Its subcellular location is the cytoplasm. It catalyses the reaction isopentenyl diphosphate = dimethylallyl diphosphate. It participates in isoprenoid biosynthesis; dimethylallyl diphosphate biosynthesis; dimethylallyl diphosphate from isopentenyl diphosphate: step 1/1. It functions in the pathway porphyrin-containing compound metabolism; chlorophyll biosynthesis. Its function is as follows. Catalyzes the 1,3-allylic rearrangement of the homoallylic substrate isopentenyl (IPP) to its highly electrophilic allylic isomer, dimethylallyl diphosphate (DMAPP). In Rhodobacter capsulatus (strain ATCC BAA-309 / NBRC 16581 / SB1003), this protein is Isopentenyl-diphosphate Delta-isomerase.